The sequence spans 1247 residues: Nitric oxide synthase (1247 aa).

The interval 13-33 (EVAEGRESSKANHIGEERRGY) is disordered. Ser146 serves as a coordination point for (6R)-L-erythro-5,6,7,8-tetrahydrobiopterin. Cys224 is a heme b binding site. 5 residues coordinate L-arginine: Gln287, Trp396, Tyr397, Glu401, and Asn406. (6R)-L-erythro-5,6,7,8-tetrahydrobiopterin contacts are provided by Trp487 and Phe500. Tyr515 is a heme b binding site. The tract at residues 537–557 (PRRKFNFKQIARAVKFTSKLF) is calmodulin-binding. Residues 567–766 (ATVLYATETG…AFRKWAPEVF (200 aa)) enclose the Flavodoxin-like domain. 712–743 (VFALGSSAYPNFCAFGKYIDNILGELGGERLM) lines the FMN pocket. Residues 795–1065 (NTVRYAPVAE…VRSAPSFHMS (271 aa)) form the FAD-binding FR-type domain. Residues 855-866 (YEPGDHVGIFPA) and 998-1008 (LQPRFYSISSS) each bind FAD. NADP(+)-binding positions include 1073–1091 (ILIGPGTGIAPFRSFWQEW) and 1170–1185 (KGHIYVCGDVTMAEHV).

This sequence belongs to the NOS family. The cofactor is heme b. FAD is required as a cofactor. Requires FMN as cofactor.

The catalysed reaction is 2 L-arginine + 3 NADPH + 4 O2 + H(+) = 2 L-citrulline + 2 nitric oxide + 3 NADP(+) + 4 H2O. Stimulated by calcium/calmodulin. In terms of biological role, produces nitric oxide (NO) which is a messenger molecule with diverse functions throughout the body. Nitric oxide limits plasmodium development in the midgut. The chain is Nitric oxide synthase from Anopheles stephensi (Indo-Pakistan malaria mosquito).